A 432-amino-acid chain; its full sequence is Adenylosuccinate synthetase (432 aa).

GTP is bound by residues 13–19 (GDEGKGK) and 41–43 (GHT). Residue D14 is the Proton acceptor of the active site. The Mg(2+) site is built by D14 and G41. Residues 14–17 (DEGK), 39–42 (NAGH), T130, R144, Q225, T240, and R304 each bind IMP. H42 functions as the Proton donor in the catalytic mechanism. Residue 300-306 (ATTGRRR) coordinates substrate. Residues R306, 332–334 (KLD), and 415–417 (STG) each bind GTP.

Belongs to the adenylosuccinate synthetase family. As to quaternary structure, homodimer. The cofactor is Mg(2+).

The protein resides in the cytoplasm. It carries out the reaction IMP + L-aspartate + GTP = N(6)-(1,2-dicarboxyethyl)-AMP + GDP + phosphate + 2 H(+). The protein operates within purine metabolism; AMP biosynthesis via de novo pathway; AMP from IMP: step 1/2. Its function is as follows. Plays an important role in the de novo pathway of purine nucleotide biosynthesis. Catalyzes the first committed step in the biosynthesis of AMP from IMP. In Erwinia tasmaniensis (strain DSM 17950 / CFBP 7177 / CIP 109463 / NCPPB 4357 / Et1/99), this protein is Adenylosuccinate synthetase.